The primary structure comprises 179 residues: Proteasome chaperone 3 (179 aa).

Belongs to the PSMG3 family. Component of the 20S proteasome chaperone. Forms a heterodimer with POC4 that binds to proteasome precursors. Interacts with POP2.

Functionally, involved in 20S proteasome assembly, facilitating the alpha-ring formation. This Saccharomyces cerevisiae (strain ATCC 204508 / S288c) (Baker's yeast) protein is Proteasome chaperone 3 (IRC25).